Consider the following 246-residue polypeptide: 1-(5-phosphoribosyl)-5-[(5-phosphoribosylamino)methylideneamino] imidazole-4-carboxamide isomerase (246 aa).

Catalysis depends on Asp8, which acts as the Proton acceptor. The active-site Proton donor is Asp131.

The protein belongs to the HisA/HisF family.

It is found in the cytoplasm. It catalyses the reaction 1-(5-phospho-beta-D-ribosyl)-5-[(5-phospho-beta-D-ribosylamino)methylideneamino]imidazole-4-carboxamide = 5-[(5-phospho-1-deoxy-D-ribulos-1-ylimino)methylamino]-1-(5-phospho-beta-D-ribosyl)imidazole-4-carboxamide. It participates in amino-acid biosynthesis; L-histidine biosynthesis; L-histidine from 5-phospho-alpha-D-ribose 1-diphosphate: step 4/9. The chain is 1-(5-phosphoribosyl)-5-[(5-phosphoribosylamino)methylideneamino] imidazole-4-carboxamide isomerase from Bordetella bronchiseptica (strain ATCC BAA-588 / NCTC 13252 / RB50) (Alcaligenes bronchisepticus).